An 81-amino-acid polypeptide reads, in one-letter code: Exodeoxyribonuclease 7 small subunit (81 aa).

Belongs to the XseB family. As to quaternary structure, heterooligomer composed of large and small subunits.

The protein resides in the cytoplasm. The enzyme catalyses Exonucleolytic cleavage in either 5'- to 3'- or 3'- to 5'-direction to yield nucleoside 5'-phosphates.. Functionally, bidirectionally degrades single-stranded DNA into large acid-insoluble oligonucleotides, which are then degraded further into small acid-soluble oligonucleotides. The chain is Exodeoxyribonuclease 7 small subunit from Paramagnetospirillum magneticum (strain ATCC 700264 / AMB-1) (Magnetospirillum magneticum).